We begin with the raw amino-acid sequence, 89 residues long: Small ribosomal subunit protein uS15 (89 aa).

A compositionally biased stretch (basic and acidic residues) spans 1 to 20; the sequence is MSITQERKSALIAEHARGKT. Positions 1–24 are disordered; that stretch reads MSITQERKSALIAEHARGKTDTGS.

Belongs to the universal ribosomal protein uS15 family. Part of the 30S ribosomal subunit. Forms a bridge to the 50S subunit in the 70S ribosome, contacting the 23S rRNA.

Its function is as follows. One of the primary rRNA binding proteins, it binds directly to 16S rRNA where it helps nucleate assembly of the platform of the 30S subunit by binding and bridging several RNA helices of the 16S rRNA. In terms of biological role, forms an intersubunit bridge (bridge B4) with the 23S rRNA of the 50S subunit in the ribosome. In Maricaulis maris (strain MCS10) (Caulobacter maris), this protein is Small ribosomal subunit protein uS15.